The chain runs to 289 residues: Eukaryotic translation initiation factor 3 subunit G (289 aa).

Disordered regions lie at residues 1-31 (MSRL…VISN) and 151-199 (DTMA…GEKM). Positions 209 to 287 (ATLRVTNVSE…LILRVEFAKK (79 aa)) constitute an RRM domain.

The protein belongs to the eIF-3 subunit G family. In terms of assembly, component of the eukaryotic translation initiation factor 3 (eIF-3) complex.

It is found in the cytoplasm. In terms of biological role, RNA-binding component of the eukaryotic translation initiation factor 3 (eIF-3) complex, which is involved in protein synthesis of a specialized repertoire of mRNAs and, together with other initiation factors, stimulates binding of mRNA and methionyl-tRNAi to the 40S ribosome. The eIF-3 complex specifically targets and initiates translation of a subset of mRNAs involved in cell proliferation. This subunit can bind 18S rRNA. This Coccidioides immitis (strain RS) (Valley fever fungus) protein is Eukaryotic translation initiation factor 3 subunit G.